A 20-amino-acid chain; its full sequence is ATP synthase subunit beta, chloroplastic (20 aa).

Residues 1–10 (METTNESLGY) show a composition bias toward polar residues. The tract at residues 1 to 20 (METTNESLGYTDQIIGPVLD) is disordered.

The protein belongs to the ATPase alpha/beta chains family. As to quaternary structure, F-type ATPases have 2 components, CF(1) - the catalytic core - and CF(0) - the membrane proton channel. CF(1) has five subunits: alpha(3), beta(3), gamma(1), delta(1), epsilon(1). CF(0) has four main subunits: a(1), b(1), b'(1) and c(9-12).

Its subcellular location is the plastid. It localises to the chloroplast thylakoid membrane. The catalysed reaction is ATP + H2O + 4 H(+)(in) = ADP + phosphate + 5 H(+)(out). Produces ATP from ADP in the presence of a proton gradient across the membrane. The catalytic sites are hosted primarily by the beta subunits. The sequence is that of ATP synthase subunit beta, chloroplastic from Chattonella marina var. antiqua (Red tide flagellate).